Here is a 424-residue protein sequence, read N- to C-terminus: MTSSNLIKQLQERGLVAQVTDEDALAERLAQGPISLYCGFDPTADSLHLGHLVPLLCLKRFQLAGHRPVALVGGATGMIGDPSFKASERKLNTEDTVNEWVEKIRHQVSPFLDFDCGENSAIAANNYDWFGGMNVLTFLRDIGKHFSVNQMINKEAVKQRLNRDDSGISFTEFSYNLLQAYDFACLNKNHGVALQIGGSDQWGNITSGIDLTRRLHQQQVYGLTVPLITKADGTKFGKTEGGAVWLDPKKTSPYKFYQFWINTADADVYRFLKFFTFMSLEEINALEEEDKNSGKAPRAQYVLAENVTGMVHGPEGLAAAKRITESLFSGDLHDMTEADFAQLAQDGMPTVELNRDADLQQALVNAELVPSRGQARTMIGSNAVAINGEKQADPEYVFTDADRLFGRYTLLRRGKKHYCLISWL.

Residue Tyr-37 participates in L-tyrosine binding. Residues 42–51 (PTADSLHLGH) carry the 'HIGH' region motif. Tyr-175 and Gln-179 together coordinate L-tyrosine. The short motif at 235-239 (KFGKT) is the 'KMSKS' region element. Residue Lys-238 coordinates ATP. The S4 RNA-binding domain occupies 357-414 (ADLQQALVNAELVPSRGQARTMIGSNAVAINGEKQADPEYVFTDADRLFGRYTLLRRG).

Belongs to the class-I aminoacyl-tRNA synthetase family. TyrS type 1 subfamily. Homodimer.

It localises to the cytoplasm. It carries out the reaction tRNA(Tyr) + L-tyrosine + ATP = L-tyrosyl-tRNA(Tyr) + AMP + diphosphate + H(+). Its function is as follows. Catalyzes the attachment of tyrosine to tRNA(Tyr) in a two-step reaction: tyrosine is first activated by ATP to form Tyr-AMP and then transferred to the acceptor end of tRNA(Tyr). This Yersinia pseudotuberculosis serotype O:1b (strain IP 31758) protein is Tyrosine--tRNA ligase.